The primary structure comprises 822 residues: Calpain-3 (822 aa).

Positions 1 to 36 (MPTVISASVAPRTGAEPRSPGPIAQAAQGKGTEAGG) are disordered. The region spanning 74-418 (LFVDPEFPPD…FTKLEICNLT (345 aa)) is the Calpain catalytic domain. Residues cysteine 129, histidine 335, and asparagine 359 contribute to the active site. The domain III stretch occupies residues 419–587 (ADALESDKLQ…KRNLSEEVEN (169 aa)). The segment at 588 to 649 (TISVDRPVKK…LKPGNIDQES (62 aa)) is linker. Residues 600–651 (PKPIIFGSDRANSNKELGVDQESEEGKDNTSPDKQAKSPQLKPGNIDQESKE) are disordered. Residues 623-635 (EEGKDNTSPDKQA) are compositionally biased toward basic and acidic residues. 4 consecutive EF-hand domains span residues 650-684 (KEQR…VVNK), 693-726 (FTLE…KKIK), 723-758 (KKIK…AGFH), and 788-822 (VRLE…TMYA). Residues 650–822 (KEQRQFRNIF…LEWLQLTMYA (173 aa)) are domain IV. Residues alanine 663, aspartate 666, glutamate 668, glutamate 673, aspartate 706, aspartate 708, serine 710, arginine 712, glutamate 717, aspartate 736, aspartate 738, serine 740, threonine 742, glutamate 747, aspartate 801, aspartate 803, aspartate 805, and isoleucine 807 each contribute to the Ca(2+) site.

Belongs to the peptidase C2 family. Homodimer; via EF-hand domain 4. Interacts with TTN/titin. Interacts with CMYA5; this interaction, which results in CMYA5 proteolysis, may protect CAPN3 from autolysis. Interacts with SIMC1. Interacts with UTP25; the interaction is required for CAPN3 translocation to the nucleolus. Skeletal muscle.

The protein resides in the cytoplasm. It is found in the nucleus. The protein localises to the nucleolus. It catalyses the reaction Broad endopeptidase activity.. With respect to regulation, activated by micromolar concentrations of calcium and inhibited by calpastatin. Its function is as follows. Calcium-regulated non-lysosomal thiol-protease. Proteolytically cleaves CTBP1. Mediates, with UTP25, the proteasome-independent degradation of p53/TP53. This is Calpain-3 (CAPN3) from Ovis aries (Sheep).